Consider the following 349-residue polypeptide: GMP reductase (349 aa).

108–131 (IDFLKIKKIFLLSSELKYICIDVA) contributes to the NADP(+) binding site. Positions 181 and 183 each coordinate K(+). Catalysis depends on cysteine 186, which acts as the Thioimidate intermediate. 216–239 (IISDGGCTVSGDIAKAFGGGADFV) contributes to the NADP(+) binding site.

The protein belongs to the IMPDH/GMPR family. GuaC type 1 subfamily. As to quaternary structure, homotetramer.

The enzyme catalyses IMP + NH4(+) + NADP(+) = GMP + NADPH + 2 H(+). Functionally, catalyzes the irreversible NADPH-dependent deamination of GMP to IMP. It functions in the conversion of nucleobase, nucleoside and nucleotide derivatives of G to A nucleotides, and in maintaining the intracellular balance of A and G nucleotides. In Buchnera aphidicola subsp. Acyrthosiphon pisum (strain 5A), this protein is GMP reductase.